Here is a 364-residue protein sequence, read N- to C-terminus: tRNA N6-adenosine threonylcarbamoyltransferase (364 aa).

The Fe cation site is built by H115 and H119. Substrate contacts are provided by residues 137 to 141, D170, G183, and N288; that span reads LVSGG. Residue D316 coordinates Fe cation.

Belongs to the KAE1 / TsaD family. It depends on Fe(2+) as a cofactor.

The protein localises to the cytoplasm. The catalysed reaction is L-threonylcarbamoyladenylate + adenosine(37) in tRNA = N(6)-L-threonylcarbamoyladenosine(37) in tRNA + AMP + H(+). Functionally, required for the formation of a threonylcarbamoyl group on adenosine at position 37 (t(6)A37) in tRNAs that read codons beginning with adenine. Is involved in the transfer of the threonylcarbamoyl moiety of threonylcarbamoyl-AMP (TC-AMP) to the N6 group of A37, together with TsaE and TsaB. TsaD likely plays a direct catalytic role in this reaction. In Bartonella bacilliformis (strain ATCC 35685 / KC583 / Herrer 020/F12,63), this protein is tRNA N6-adenosine threonylcarbamoyltransferase.